A 758-amino-acid polypeptide reads, in one-letter code: POU domain, class 2, transcription factor 1 (758 aa).

Composition is skewed to polar residues over residues 1-10, 19-30, and 275-285; these read MKLHSSSKIQ, RMNNPSETSKSP, and VQQLPQSQTTP. 5 disordered regions span residues 1 to 43, 271 to 296, 377 to 398, 450 to 472, and 534 to 573; these read MKLH…QTNG, AATP…LEEP, TNQS…RRKK, EKRI…LFSS, and SVLT…MTSS. The 75-residue stretch at 294 to 368 folds into the POU-specific domain; it reads EEPSDLEELE…LLEKWLNDAE (75 aa). The segment at residues 395 to 454 is a DNA-binding region (homeobox); it reads RRKKRTSIETNIRVALEKSFLENQKPTSEEITMIADQLNMEKEVIRVWFCNRRQKEKRIN. A compositionally biased stretch (low complexity) spans 455 to 472; the sequence is PPSSGGSSSSPIKSLFSS.

It belongs to the POU transcription factor family. Class-2 subfamily. Expressed in oocytes (at protein level). Expressed in the tadpole brain (at protein level).

Its subcellular location is the cytoplasm. It is found in the nucleus. Transcription factor that binds to the octamer motif (5'-ATTTGCAT-3') and activates the promoters of the genes of some small nuclear RNAs (snRNA) and histone H2B. In vitro does not bind to variant octamer sequences, such as the H2B octamer 5'-GTTTGCAT-3', although binding has been observed in vivo during early embryogenesis, suggesting that interactions between pou2f1 and other factors might be required for octamer-dependent H2B transcription. Acts downstream of Notch signaling during radial glia formation. May be important for gastrulation, possibly through the regulation of an FGF-type signaling pathway. In Xenopus laevis (African clawed frog), this protein is POU domain, class 2, transcription factor 1 (pou2f1).